The sequence spans 183 residues: Mast cell-expressed membrane protein 1 (183 aa).

Positions 1–26 (MHASASQDKNRRKPGHDEGAHNPDYE) are disordered. Topologically, residues 1–70 (MHASASQDKN…PPWLYRTIMM (70 aa)) are cytoplasmic. Basic and acidic residues predominate over residues 15–24 (GHDEGAHNPD). A helical; Signal-anchor for type II membrane protein membrane pass occupies residues 71-91 (LYVLLALVFLSCIVLSALVLV). Residues 92-183 (KNSEMSKELW…EKKAQPQPST (92 aa)) are Extracellular-facing. N-linked (GlcNAc...) asparagine glycosylation is present at Asn-109.

It is found in the membrane. The polypeptide is Mast cell-expressed membrane protein 1 (Mus musculus (Mouse)).